A 60-amino-acid polypeptide reads, in one-letter code: Metallothionein B (60 aa).

The interval 1-28 is beta; sequence MDPCECTKSGTCNCGGSCTCTNCSCTSC. A divalent metal cation is bound by residues cysteine 4, cysteine 6, cysteine 12, cysteine 14, cysteine 18, cysteine 20, cysteine 23, cysteine 25, cysteine 28, cysteine 32, cysteine 33, cysteine 35, cysteine 36, cysteine 40, cysteine 43, cysteine 47, cysteine 49, cysteine 54, cysteine 58, and cysteine 59. Residues 29–60 form an alpha region; the sequence is KKSCCPCCPSGCTKCASGCVCKGKTCDTSCCQ.

Belongs to the metallothionein superfamily. Type 1 family.

Its function is as follows. Metallothioneins have a high content of cysteine residues that bind various heavy metals. The polypeptide is Metallothionein B (mtb) (Chaenocephalus aceratus (Blackfin icefish)).